Reading from the N-terminus, the 886-residue chain is Cytosolic carboxypeptidase-like protein 5 (886 aa).

In terms of domain architecture, Peptidase M14 spans 157–570; that stretch reads YPFSYSDCQE…AMAIAALDMA (414 aa). The Zn(2+) site is built by histidine 252 and glutamate 255. A compositionally biased stretch (low complexity) spans 344–354; it reads SQSSSEHQPSS. The segment at 344 to 364 is disordered; sequence SQSSSEHQPSSCLPPDAPVSD. Residue histidine 434 coordinates Zn(2+). Glutamate 516 acts as the Proton donor/acceptor in catalysis. Disordered stretches follow at residues 605–734 and 784–848; these read STLN…SSHK and LQAR…FSPI. Polar residues predominate over residues 631 to 640; that stretch reads CSENTLSRAR. Positions 641 to 666 are enriched in low complexity; sequence SFSTGTSAGGSSSSQQNSPQMKNSPS. Positions 696 to 705 are enriched in basic and acidic residues; sequence REPRSQDRRR. A compositionally biased stretch (low complexity) spans 714–732; it reads PAGSLAPSPAPTSSGPASS. Serine 841 carries the phosphoserine modification.

The protein belongs to the peptidase M14 family. Zn(2+) is required as a cofactor. Expressed in brain.

Its subcellular location is the cytoplasm. It is found in the cytosol. The protein localises to the nucleus. The protein resides in the cytoskeleton. It localises to the spindle. Its subcellular location is the midbody. It catalyses the reaction gamma-L-glutamyl-L-glutamyl-[protein] + H2O = L-glutamyl-[protein] + L-glutamate. The enzyme catalyses (L-glutamyl)(n+1)-gamma-L-glutamyl-L-glutamyl-[protein] + H2O = (L-glutamyl)(n)-gamma-L-glutamyl-L-glutamyl-[protein] + L-glutamate. It carries out the reaction C-terminal L-alpha-aminoacyl-L-glutamyl-[tubulin] + H2O = C-terminal L-alpha-aminoacyl-[tubulin] + L-glutamate. The catalysed reaction is C-terminal L-alpha-aminoacyl-L-glutamyl-L-glutamyl-[tubulin] + H2O = C-terminal L-alpha-aminoacyl-L-glutamyl-[tubulin] + L-glutamate. Functionally, metallocarboxypeptidase that mediates deglutamylation of tubulin and non-tubulin target proteins. Catalyzes the removal of polyglutamate side chains present on the gamma-carboxyl group of glutamate residues within the C-terminal tail of alpha- and beta-tubulin. Cleaves alpha- and gamma-linked polyglutamate tubulin side-chain, as well as the branching point glutamate. Also catalyzes the removal of alpha-linked glutamate residues from the carboxy-terminus of alpha-tubulin. Mediates deglutamylation of nucleotidyltransferase CGAS, leading to CGAS antiviral defense response activation. This Homo sapiens (Human) protein is Cytosolic carboxypeptidase-like protein 5.